The sequence spans 103 residues: N(4)-acetylcytidine amidohydrolase (103 aa).

Positions 6–101 (ITFFQRFQDD…QTQFYVIEFK (96 aa)) constitute an ASCH domain. The active-site Proton acceptor is the Lys21. Thr24 (nucleophile) is an active-site residue. Glu74 acts as the Proton donor in catalysis.

The protein belongs to the N(4)-acetylcytidine amidohydrolase family.

It carries out the reaction N(4)-acetylcytidine + H2O = cytidine + acetate + H(+). The catalysed reaction is N(4)-acetyl-2'-deoxycytidine + H2O = 2'-deoxycytidine + acetate + H(+). The enzyme catalyses N(4)-acetylcytosine + H2O = cytosine + acetate + H(+). In terms of biological role, catalyzes the hydrolysis of N(4)-acetylcytidine (ac4C). The chain is N(4)-acetylcytidine amidohydrolase (yqfB) from Escherichia coli (strain K12 / MC4100 / BW2952).